Here is an 811-residue protein sequence, read N- to C-terminus: Glycerol-3-phosphate acyltransferase (811 aa).

The HXXXXD motif motif lies at 303-308 (CHRSHM).

This sequence belongs to the GPAT/DAPAT family.

Its subcellular location is the cell inner membrane. The catalysed reaction is sn-glycerol 3-phosphate + an acyl-CoA = a 1-acyl-sn-glycero-3-phosphate + CoA. Its pathway is phospholipid metabolism; CDP-diacylglycerol biosynthesis; CDP-diacylglycerol from sn-glycerol 3-phosphate: step 1/3. The polypeptide is Glycerol-3-phosphate acyltransferase (Glaesserella parasuis serovar 5 (strain SH0165) (Haemophilus parasuis)).